A 426-amino-acid polypeptide reads, in one-letter code: Histidine--tRNA ligase 1 (426 aa).

Belongs to the class-II aminoacyl-tRNA synthetase family. Homodimer.

Its subcellular location is the cytoplasm. The enzyme catalyses tRNA(His) + L-histidine + ATP = L-histidyl-tRNA(His) + AMP + diphosphate + H(+). The polypeptide is Histidine--tRNA ligase 1 (Bacillus cereus (strain ATCC 14579 / DSM 31 / CCUG 7414 / JCM 2152 / NBRC 15305 / NCIMB 9373 / NCTC 2599 / NRRL B-3711)).